Consider the following 457-residue polypeptide: tRNA(Ile)-lysidine synthase (457 aa).

27 to 32 serves as a coordination point for ATP; it reads SGGLDS.

This sequence belongs to the tRNA(Ile)-lysidine synthase family.

The protein localises to the cytoplasm. The catalysed reaction is cytidine(34) in tRNA(Ile2) + L-lysine + ATP = lysidine(34) in tRNA(Ile2) + AMP + diphosphate + H(+). Its function is as follows. Ligates lysine onto the cytidine present at position 34 of the AUA codon-specific tRNA(Ile) that contains the anticodon CAU, in an ATP-dependent manner. Cytidine is converted to lysidine, thus changing the amino acid specificity of the tRNA from methionine to isoleucine. The sequence is that of tRNA(Ile)-lysidine synthase from Hamiltonella defensa subsp. Acyrthosiphon pisum (strain 5AT).